The primary structure comprises 139 residues: Large ribosomal subunit protein uL16 (139 aa).

This sequence belongs to the universal ribosomal protein uL16 family. Part of the 50S ribosomal subunit.

In terms of biological role, binds 23S rRNA and is also seen to make contacts with the A and possibly P site tRNAs. This is Large ribosomal subunit protein uL16 from Synechocystis sp. (strain ATCC 27184 / PCC 6803 / Kazusa).